The chain runs to 350 residues: Phosphotriesterase-related protein (350 aa).

A divalent metal cation-binding residues include His-22, His-24, Glu-169, His-201, His-230, and Asp-298.

This sequence belongs to the metallo-dependent hydrolases superfamily. Phosphotriesterase family. The cofactor is a divalent metal cation.

The chain is Phosphotriesterase-related protein from Drosophila willistoni (Fruit fly).